Reading from the N-terminus, the 397-residue chain is Phosphopentomutase (397 aa).

Mn(2+) is bound by residues Asp-10, Asp-296, His-301, Asp-337, His-338, and His-349.

It belongs to the phosphopentomutase family. Mn(2+) is required as a cofactor.

It localises to the cytoplasm. It catalyses the reaction 2-deoxy-alpha-D-ribose 1-phosphate = 2-deoxy-D-ribose 5-phosphate. The enzyme catalyses alpha-D-ribose 1-phosphate = D-ribose 5-phosphate. It functions in the pathway carbohydrate degradation; 2-deoxy-D-ribose 1-phosphate degradation; D-glyceraldehyde 3-phosphate and acetaldehyde from 2-deoxy-alpha-D-ribose 1-phosphate: step 1/2. Its function is as follows. Isomerase that catalyzes the conversion of deoxy-ribose 1-phosphate (dRib-1-P) and ribose 1-phosphate (Rib-1-P) to deoxy-ribose 5-phosphate (dRib-5-P) and ribose 5-phosphate (Rib-5-P), respectively. In Elusimicrobium minutum (strain Pei191), this protein is Phosphopentomutase.